A 2496-amino-acid chain; its full sequence is MPKLLESIVTVIDVFYQYATEYGNCDMLSKEEMKELLVTEFHQILKNPDDPDTVDIIMQNLDRDHNHKVDFTEYLLMILKLTKACNKIIGKDYCQASGSKQKNHSHQHQEEQSKKETENKEQKGSISSSAGENDSYSRGSRGSNKSKSKKLRKGKEQSSKQTTKSNSSDHENSEDYEQGQHESGFSNSSGNGRPSSRKASGFPQPGSEQGQSSSSSTKGSGECYSSGNGKHGSSSGGSAVSGSGHSNTYGKQGTGSRHSSSNRRSRSTSRESSGSQEYSSGSSEEPGFTHGSGRKNSSTCGKNGSYSGQSTGRHQQGFGSSHELESGQSITSANHGSHSNQSSCSGTRECGSSESSMKKTHVSGSGHSSSTGKYTSTSGQNYNSTRQGCGQGKSSGSEQYGASSGQSSGCSSGQSTRYGEQGSGSRNSSTQSRGRSTSRESSTSQQFGSGSGRSSGFSQGGSGQGRSSRGGQQGSFSGQTEGSQQHGSCCGQSSGYGQNEYGSGHSASSGQQGSHYSQSSSYGTHNSGGSPSSSQRGHGSRSGRSSGLGQYGSPSGQTSSSTRQGSGQGQASGSGRYGASSGQTSGCGSGQSTRYGEQGSGSRNSSTQSRGRSTSRESSTSQRYGSGSGESSGFSQGGSGQGRSSRGGQQGSFSGQTSGRSQHQSGSRHGSGSGQFPISGQQGSHHGHSSSSGTHNSGSSQSSSTQWSHGSGSEQSSGLGHYGSTSGQTASSTRQGSGQGQASGSGRCGASSGQTSGCGSGQSTRYGEQGSGSRNSSTQSRGRSTSRESSTSQRFGSGSGGSSGFSQGRSGQGRSSRGGQQGSFSGQTEGSQQHGSCCGQSSGYGQNEYGSGHSASSGQQGSHYSQSSSYGTHNSGGSPSSRPAGGHGSRSGRSSGLGQYGSPSGQTSSSTRQGSGQGQASGSGRYGASSGQTSGCGSGQSTRYGEQGSGSRNSSTQSRGRSTSRESSTSQRYGSGSGESSGFSQGGSGQGRSSRGGQQGSFSGQTSGRSQHQSGSRHGSGSGQFPISGQQGSHHGHSSSSGTHNSGSSQSSSTQWSHGSGSEQSSGLGHYGSTSGQTASSTRQGSGQGQASGSGRCGASSGQTSGCGSGQSTRYGEQGSGSRNSSTQSRGRSTSRESSTSQRFGSGSGGSSGFSQGRSGQGRSSRGGQQGSFSGQTEGSQQHGSCCGQSSGYGQNEYGSGHSASSGQQGSHYSQSSSYGTHNSGGSPSSSQRGHGSRSGRSSGLGQYGSPSGQTSSSTRQGSGQGQASGSGRYGASSGQTSGCRSGQSTRYGGQGSGSRNSSTQSRGRSTSRESSTSQRYGSGSGESSGFSQGGSGQGRSSRGGQQGSFSGQTSGRNQHQSGSRHGSGSGQFPISGQQGSHHGHSSSSGTHNSGSSQSSSTQWSHGSGSEQSSGLGHYGSTSGQTASSTRQGSGQGQASGSGRCGASSGQTSGCGSGQSTRYGEQGSGSRNSSTQSRGRSTSRESSTSQRFGSGSGGSSGFSQGRSGQGRSSRGGQQGSFSGQTEGSQQHGSCCGQSSGYGQNEYGSGHSASSGQQGSHYSQSSSYGTHNSGGSPSSSQRGHGSRSGRSSGLGQYGSPSGQTSSSTRQGSGQGQASGSGRYGASSGQTSGCGSGQPTRYGEQGSGSRNSSTQSRGRSTSRESSTSQRCGSGSGESSGFSQGGSGQGRSSRGGQQGSFSGQTSGRSQHQSGSRHGSGSGQFPISGQQGSHHGHSSSSGTHNSGSSQSSSTQWSHGSGSEQSSGLGHYGSTSGQTASSTRQGSGQGQASGSGRCGASSGQTSGCGSDQSTRYGEQGSGSRNSSTQSRGRSTSRESSTSQRFGSGSGGSSGFSQGRSGQGRSSRGGQQGSFSGQTEGSQQHGSCCGQSSGYGQNEYGSGHSASSGQQGSHYSQSSSYGTHNSGGSPSSSQRGHGSRSGRSSGLGQYGSPSGQTSSSTRQGSGQGQASGSGRYGASSGQTSGCGSGQSTRYGEQGSGSRNSSTQSRGRSTSRESSTSQRYGSGSGESSGFSQGGSGQGRSSRGGQQGSFSGQTSGRSQHQSGSRHGSGSGQFPISGQQGSHHGHSSSSGTHNSGSSQSSSTQWSHGSGSEQSSGLGHYGSTSGQTASSTRQGSGQGQASGSGRCGASSGQTSGCGSGQSTRYGEQGSGSRNSSTQSRGRSTSRESSTSQRYGSGSGESSGFSQGGSGQGRSSRGGQQGSFSGQTSGRSQHQSGSRHGSGSGQFPISGQQGSHHGHSSSSGTHNSGSSQSSSTQWSHGSGSEQSSGLGQYGSPSGQTSSSTRQGSGQGQASGSGRYGASSGQTSGCGSGQSTRYGEQGSGSRNSSTQSRGRSTSRESSTSQRYGSGSGESSGFSQGGSGQGRSSRGGQQGSFSGQTSGRSQHQSGSRHGSGSGQFPISGQQGSHHGHSSSSGTHNSGSSQSSSTQWSHGSGSEQSSGLGHYGSTSGQTASSTRQGSGQGQASGSGRCGASSGQTSGCGSG.

The interval 1 to 81 (MPKLLESIVT…TEYLLMILKL (81 aa)) is S-100-like. 2 EF-hand domains span residues 13–48 (DVFY…LKNP) and 49–84 (DDPD…LTKA). Positions 27, 32, 62, 64, 66, 68, and 73 each coordinate Ca(2+). A s (spacer) region spans residues 82-98 (TKACNKIIGKDYCQASG). The interval 97-2496 (SGSKQKNHSH…SGQTSGCGSG (2400 aa)) is disordered. Residues 99-145 (SKQKNHSHQHQEEQSKKETENKEQKGSISSSAGENDSYSRGSRGSNK) form a 1; truncated repeat. Positions 107 to 123 (QHQEEQSKKETENKEQK) are enriched in basic and acidic residues. Residues 124-134 (GSISSSAGEND) show a composition bias toward polar residues. Basic residues predominate over residues 144 to 153 (NKSKSKKLRK). A run of 27 repeats spans residues 146–231 (SKSK…NGKH), 232–321 (GSSS…FGSS), 326–400 (SGQS…SEQY), 401–491 (GASS…SCCG), 492–577 (QSSG…SGRY), 578–668 (GASS…SGSR), 669–748 (HGSG…SGRC), 749–839 (GASS…SCCG), 840–926 (QSSG…SGRY), 927–1017 (GASS…SGSR), 1018–1097 (HGSG…SGRC), 1098–1188 (GASS…SCCG), 1189–1274 (QSSG…SGRY), 1275–1365 (GASS…SGSR), 1366–1445 (HGSG…SGRC), 1446–1536 (GASS…SCCG), 1537–1622 (QSSG…SGRY), 1623–1713 (GASS…SGSR), 1714–1793 (HGSG…SGRC), 1794–1884 (GASS…SCCG), 1885–1970 (QSSG…SGRY), 1971–2061 (GASS…SGSR), 2062–2141 (HGSG…SGRC), 2142–2232 (GASS…SGSR), 2233–2312 (HGSG…SGRY), 2313–2403 (GASS…SGSR), and 2410–2496 (QFPI…CGSG). Composition is skewed to low complexity over residues 183-194 (SGFSNSSGNGRP), 200-246 (SGFP…SGHS), and 270-286 (RESS…SEEP). 2 stretches are compositionally biased toward polar residues: residues 294-319 (RKNS…QGFG) and 326-355 (SGQS…SSES). 3 stretches are compositionally biased toward low complexity: residues 362-379 (VSGS…STSG), 394-415 (SSGS…SGQS), and 423-448 (SGSR…QQFG). Positions 449-464 (SGSGRSSGFSQGGSGQ) are enriched in gly residues. The segment covering 465–565 (GRSSRGGQQG…GQTSSSTRQG (101 aa)) has biased composition (low complexity). S506 and S508 each carry phosphoserine. Over residues 566–576 (SGQGQASGSGR) the composition is skewed to gly residues. Low complexity-rich tracts occupy residues 577–593 (YGAS…GQST) and 600–625 (SGSR…QRYG). Gly residues predominate over residues 626 to 641 (SGSGESSGFSQGGSGQ). Composition is skewed to low complexity over residues 642–670 (GRSS…SRHG) and 679–713 (SGQQ…GSGS). R646 carries the omega-N-methylarginine modification. Position 716 is a phosphoserine (S716). The segment covering 723-736 (GSTSGQTASSTRQG) has biased composition (low complexity). Residues 737–747 (SGQGQASGSGR) show a composition bias toward gly residues. Composition is skewed to low complexity over residues 748-764 (CGAS…GQST), 771-796 (SGSR…QRFG), 804-884 (GFSQ…SRPA), and 891-914 (SGRS…TRQG). A Phosphoserine modification is found at S815. Positions 915-925 (SGQGQASGSGR) are enriched in gly residues. Low complexity-rich tracts occupy residues 926 to 942 (YGAS…GQST) and 949 to 974 (SGSR…QRYG). Gly residues predominate over residues 975-990 (SGSGESSGFSQGGSGQ). Composition is skewed to low complexity over residues 991–1019 (GRSS…SRHG), 1028–1062 (SGQQ…GSGS), and 1072–1085 (GSTS…TRQG). At R995 the chain carries Omega-N-methylarginine. Residues 1086–1096 (SGQGQASGSGR) are compositionally biased toward gly residues. Low complexity-rich tracts occupy residues 1097 to 1113 (CGAS…GQST), 1120 to 1145 (SGSR…QRFG), and 1153 to 1262 (GFSQ…TRQG). The residue at position 1229 (S1229) is a Phosphoserine. Gly residues predominate over residues 1263–1273 (SGQGQASGSGR). Positions 1281–1292 (TSGCRSGQSTRY) are enriched in polar residues. Residues 1298–1322 (GSRNSSTQSRGRSTSRESSTSQRYG) are compositionally biased toward low complexity. Positions 1323–1338 (SGSGESSGFSQGGSGQ) are enriched in gly residues. Low complexity-rich tracts occupy residues 1339 to 1367 (GRSS…SRHG), 1376 to 1410 (SGQQ…GSGS), and 1420 to 1433 (GSTS…TRQG). R1343 carries the post-translational modification Omega-N-methylarginine. Positions 1434-1444 (SGQGQASGSGR) are enriched in gly residues. Composition is skewed to low complexity over residues 1445 to 1461 (CGAS…GQST), 1468 to 1493 (SGSR…QRFG), and 1501 to 1610 (GFSQ…TRQG). 2 positions are modified to phosphoserine: S1551 and S1553. Gly residues predominate over residues 1611–1621 (SGQGQASGSGR). Low complexity-rich tracts occupy residues 1622-1631 (YGASSGQTSG) and 1645-1670 (SGSR…QRCG). Position 1650 is a phosphoserine (S1650). Gly residues predominate over residues 1671–1686 (SGSGESSGFSQGGSGQ). Low complexity-rich tracts occupy residues 1687–1715 (GRSS…SRHG), 1724–1758 (SGQQ…GSGS), and 1768–1781 (GSTS…TRQG). An Omega-N-methylarginine modification is found at R1691. Gly residues predominate over residues 1782 to 1792 (SGQGQASGSGR). Residues 1800–1811 (TSGCGSDQSTRY) show a composition bias toward polar residues. Low complexity-rich tracts occupy residues 1816–1841 (SGSR…QRFG) and 1849–1958 (GFSQ…TRQG). Residues 1959-1969 (SGQGQASGSGR) are compositionally biased toward gly residues. 2 stretches are compositionally biased toward low complexity: residues 1970–1986 (YGAS…GQST) and 1993–2018 (SGSR…QRYG). Position 2011 is a phosphoserine (S2011). Positions 2019–2034 (SGSGESSGFSQGGSGQ) are enriched in gly residues. Composition is skewed to low complexity over residues 2035–2063 (GRSS…SRHG) and 2072–2106 (SGQQ…GSGS). Omega-N-methylarginine is present on R2039. A phosphoserine mark is found at S2109 and S2124. Residues 2116–2129 (GSTSGQTASSTRQG) are compositionally biased toward low complexity. Residues 2130–2140 (SGQGQASGSGR) are compositionally biased toward gly residues. Composition is skewed to low complexity over residues 2141 to 2157 (CGAS…GQST) and 2164 to 2189 (SGSR…QRYG). Gly residues predominate over residues 2190 to 2205 (SGSGESSGFSQGGSGQ). Composition is skewed to low complexity over residues 2206-2234 (GRSS…SRHG) and 2243-2300 (SGQQ…TRQG). R2210 carries the post-translational modification Omega-N-methylarginine. Positions 2301-2311 (SGQGQASGSGR) are enriched in gly residues. Composition is skewed to low complexity over residues 2312–2328 (YGAS…GQST) and 2335–2360 (SGSR…QRYG). S2353 bears the Phosphoserine mark. Residues 2361-2376 (SGSGESSGFSQGGSGQ) show a composition bias toward gly residues. Composition is skewed to low complexity over residues 2377-2405 (GRSS…SRHG), 2414-2448 (SGQQ…GSGS), and 2458-2471 (GSTS…TRQG). At R2381 the chain carries Omega-N-methylarginine. Positions 2472–2482 (SGQGQASGSGR) are enriched in gly residues.

This sequence belongs to the S100-fused protein family. In the N-terminal section; belongs to the S-100 family. Processed during the process of epidermal differentiation. Post-translationally, forms covalent cross-links mediated by transglutaminase TGM3, between glutamine and the epsilon-amino group of lysine residues (in vitro). In terms of tissue distribution, embryonic skin. Highest level in the adult forestomach followed by the skin. Lower levels in the tongue, esophagus. Detected in the granular and cornified layers of the mature epidermis.

The protein localises to the cytoplasmic granule. Functionally, component of the epidermal cornified cell envelopes. This chain is Hornerin (Hrnr), found in Mus musculus (Mouse).